A 232-amino-acid chain; its full sequence is Sec-independent protein translocase protein TatB (232 aa).

The chain crosses the membrane as a helical span at residues 1–21; sequence MFDIGFGELMLLFVIGLVVLG. Disordered stretches follow at residues 108–129 and 176–232; these read EPHT…GVTP and AAST…NNDR. 2 stretches are compositionally biased toward low complexity: residues 189–203 and 214–232; these read ADSA…ATPA and RAAT…NNDR.

It belongs to the TatB family. In terms of assembly, the Tat system comprises two distinct complexes: a TatABC complex, containing multiple copies of TatA, TatB and TatC subunits, and a separate TatA complex, containing only TatA subunits. Substrates initially bind to the TatABC complex, which probably triggers association of the separate TatA complex to form the active translocon.

Its subcellular location is the cell inner membrane. Functionally, part of the twin-arginine translocation (Tat) system that transports large folded proteins containing a characteristic twin-arginine motif in their signal peptide across membranes. Together with TatC, TatB is part of a receptor directly interacting with Tat signal peptides. TatB may form an oligomeric binding site that transiently accommodates folded Tat precursor proteins before their translocation. This is Sec-independent protein translocase protein TatB from Sodalis glossinidius (strain morsitans).